The primary structure comprises 642 residues: MGIPLTWMLLVMMVTSWFTLAEASNSTEARRCSECHNNATCTVDGVVTTCSCQTGFTGDGLVCEDMDECATPWTHNCSNSSCVNTPGSFKCSCQDGFRLTPELSCTDVDECSEQGLSNCHALATCVNTEGDYLCVCPEGFTGDGWYCECSPGSCEPGLDCLPQGPDGKLVCQDPCNTYETLTEYWRSTEYGVGYSCDAGLHGWYRFTGQGGVRMAETCVPVLRCNTAAPMWLNGSHPSSSEGIVSRTACAHWSDQCCRWSTEIQVKACPGGFYIYNLTAPPECNLAYCTDPSSVEGTCEECRVDEDCISDNGRWRCQCKQDSNITDVSQLEYRLECGANDIKMSLRKCQLQSLGFMNVFMYLNDRQCSGFSESDERDWMSIVTPARNGPCGTVLRRNETHATYSNTLYLANAIIIRDIIIRMNFECSYPLDMKVSLKTSLQPMVSALNISLGGTGKFTVRMALFQSPTYTQPHQGPSVMLSTEAFLYVGTMLDGGDLSRFVLLMTNCYATPSSNSTDPVKYFIIQDSCPRTEDTTIQVTENGESSQARFSVQMFRFAGNYDLVYLHCEVYLCDSTSEQCKPTCSGTRFRSGNFIDQTRVLNLGPITRQGVQASVSKAASSNLRLLSIWLLLFPSATLIFMVQ.

Residues M1 to S24 form the signal peptide. N-linked (GlcNAc...) asparagine glycans are attached at residues N25 and N38. Residues E28–E64 form the EGF-like 1 domain. Cystine bridges form between C32–C41, C35–C50, C52–C63, C69–C82, C77–C91, C93–C105, C111–C125, C119–C134, C136–C147, C149–C160, C154–C171, C175–C268, C196–C283, C218–C256, C224–C288, C249–C257, C298–C307, C301–C316, C318–C348, C336–C426, and C367–C390. The region spanning D65–T106 is the EGF-like 2; calcium-binding domain. Residues N76 and N79 are each glycosylated (N-linked (GlcNAc...) asparagine). The region spanning D107–E148 is the EGF-like 3; calcium-binding domain. Residues C149 to Q172 are beta hairpin. The D10C stretch occupies residues D173–S292. An N-linked (GlcNAc...) asparagine glycan is attached at N233. The N-linked (GlcNAc...) asparagine glycan is linked to N276. Residues S293 to I324 enclose the EGF-like 4 domain. Residue N323 is glycosylated (N-linked (GlcNAc...) asparagine). The interval E335 to L430 is ZP-N. In terms of domain architecture, ZP spans E335–S590. Residues N397 and N448 are each glycosylated (N-linked (GlcNAc...) asparagine). The flexible ZP-N/ZP-C linker; important for secretion and polymerization into filaments stretch occupies residues D431–T454. The tract at residues G455 to Q465 is internal hydrophobic patch (IHP). Residues G455–S590 form a ZP-C region. Cystine bridges form between C507–C567, C528–C583, and C572–C579. An N-linked (GlcNAc...) asparagine glycan is attached at N514. An essential for cleavage by HPN region spans residues R587–S590. The tract at residues V599–R607 is external hydrophobic patch (EHP); regulates polymerization into filaments. A618 carries the GPI-anchor amidated alanine lipid modification. Residues S619–Q642 constitute a propeptide, removed in mature form.

As to quaternary structure, homodimer that then polymerizes into long filaments. The filaments can additionally assemble laterally to form a sheet. The filaments consist of a zigzag-shaped backbone with laterally protruding arms which interact with bacterial adhesin fimH. Two fimH molecules can bind to a single UMOD monomer. Post-translationally, N-glycosylated. Proteolytically cleaved at a conserved C-terminal proteolytic cleavage site to generate the secreted form found in urine. This cleavage is catalyzed by HPN. As to expression, detected in urine (secreted form). Detected in kidney thick ascending limb epithelial cells (at protein level).

Its subcellular location is the secreted. The protein localises to the apical cell membrane. It is found in the basolateral cell membrane. The protein resides in the cell projection. It localises to the cilium membrane. Its function is as follows. Functions in biogenesis and organization of the apical membrane of epithelial cells of the thick ascending limb of Henle's loop (TALH), where it promotes formation of complex filamentous gel-like structure that may play a role in the water barrier permeability. May serve as a receptor for binding and endocytosis of cytokines (IL-1, IL-2) and TNF. Facilitates neutrophil migration across renal epithelia. Functionally, in the urine, may contribute to colloid osmotic pressure, retards passage of positively charged electrolytes and inhibits formation of liquid containing supersaturated salts and subsequent formation of salt crystals. Protects against urinary tract infections by binding to type 1 fimbriated E.coli. Binds to the bacterial adhesin fimH which mediates the stable formation of bacterial aggregates, prevents the binding of E.coli to uroplakins UPK1A and UPK1B which act as urothelial receptors for type I fimbriae, and allows for pathogen clearance through micturation. Also promotes aggregation of other bacteria including K.pneumoniae, P.aeruginosa and S.mitis and so may also protect against other uropathogens. The sequence is that of Uromodulin (Umod) from Mus musculus (Mouse).